The chain runs to 177 residues: uncharacterized protein (177 aa).

It localises to the plastid. The protein localises to the chloroplast. This is an uncharacterized protein from Chlorella vulgaris (Green alga).